The chain runs to 140 residues: ATP synthase epsilon chain (140 aa).

Belongs to the ATPase epsilon chain family. In terms of assembly, F-type ATPases have 2 components, CF(1) - the catalytic core - and CF(0) - the membrane proton channel. CF(1) has five subunits: alpha(3), beta(3), gamma(1), delta(1), epsilon(1). CF(0) has three main subunits: a, b and c.

The protein localises to the cell inner membrane. Its function is as follows. Produces ATP from ADP in the presence of a proton gradient across the membrane. The chain is ATP synthase epsilon chain from Yersinia pseudotuberculosis serotype O:1b (strain IP 31758).